Here is a 1557-residue protein sequence, read N- to C-terminus: Ras guanine nucleotide exchange factor K (1557 aa).

Pro residues predominate over residues 1-16 (MEPTINPPVNLPPPVP). 6 disordered regions span residues 1-121 (MEPT…SYTV), 146-181 (VETLSSSSPSPIKTTTTPPPPVPSKSKSKSSEKLSV), 195-238 (LYQQ…SPQL), 283-347 (SPLP…GLTP), 558-619 (NNNN…DELS), and 881-937 (TNNN…QVNH). Composition is skewed to low complexity over residues 17–40 (SRSNLSLNYSNNNTNNTNNTNNTN), 52–63 (SSPSSPSSPSPS), 73–90 (NNNNNNNNNNNHINNGNV), 102–114 (ISSPQSSPIHTSS), 148–161 (TLSSSSPSPIKTTT), 195–207 (LYQQQQQQSNPNS), and 222–236 (PPSSSSSSTTPSTSP). Over residues 283–310 (SPLPPPPLTIPNKVPPLPMRLPPPPPPQ) the composition is skewed to pro residues. Coiled-coil stretches lie at residues 310-338 (QQLDQMYSNNNQQQQQQQQQQQNNESNST) and 591-629 (NNNNNNNNNNNNNNNNNNNNLHQQQDELSSSIQLEEEEL). Over residues 311 to 333 (QLDQMYSNNNQQQQQQQQQQQNN) the composition is skewed to low complexity. The segment covering 334-343 (ESNSTTTSEG) has biased composition (polar residues). Composition is skewed to low complexity over residues 558–610 (NNNN…NNNN) and 881–928 (TNNN…TPTT). Residues 1058-1177 (LNAEIDAATL…QIRNCILKRT (120 aa)) form the N-terminal Ras-GEF domain. The interval 1254-1303 (PSISQNTPSSPSLIPSSPRPITSSSSVSSSTLLKSPLSQQAKSRIPETKT) is disordered. Positions 1261–1291 (PSSPSLIPSSPRPITSSSSVSSSTLLKSPLS) are enriched in low complexity. The 234-residue stretch at 1316–1549 (DDEEIARQLT…YHLSLLKEPR (234 aa)) folds into the Ras-GEF domain.

In terms of biological role, promotes the exchange of Ras-bound GDP by GTP. The polypeptide is Ras guanine nucleotide exchange factor K (gefK) (Dictyostelium discoideum (Social amoeba)).